An 89-amino-acid chain; its full sequence is MAKKSKIAKAKRIEATVEKFANRRAELKAAGDYAALALLPRDASPTRIHRRDHLDGRPHAYMRKFGLSRLNFRQLAHEGKIPGVQKASW.

It belongs to the universal ribosomal protein uS14 family. As to quaternary structure, part of the 30S ribosomal subunit. Contacts proteins S3 and S10.

Binds 16S rRNA, required for the assembly of 30S particles and may also be responsible for determining the conformation of the 16S rRNA at the A site. The sequence is that of Small ribosomal subunit protein uS14A from Levilactobacillus brevis (strain ATCC 367 / BCRC 12310 / CIP 105137 / JCM 1170 / LMG 11437 / NCIMB 947 / NCTC 947) (Lactobacillus brevis).